The following is an 831-amino-acid chain: Prolactin receptor (831 aa).

Residues 1 to 23 form the signal peptide; the sequence is MKQDLISSVQIILFLPLTTVGLA. Residues 24-438 are Extracellular-facing; it reads GQSFPGKPKI…QIPNDFRVKD (415 aa). Fibronectin type-III domains follow at residues 30–128, 129–227, 230–331, and 332–433; these read KPKI…VQPG, SPVN…IPSG, PPEK…VQPD, and PPVN…IPND. C36 and C46 are joined by a disulfide. N59 carries N-linked (GlcNAc...) asparagine glycosylation. An intrachain disulfide couples C75 to C86. N-linked (GlcNAc...) asparagine glycans are attached at residues N91, N100, N112, N132, N262, N303, N315, and N335. Zn(2+)-binding residues include D414 and H416. Residues 419-423 carry the WSXWS motif motif; the sequence is WSEWS. Residues 439–459 form a helical membrane-spanning segment; sequence MIVWIVLGVLSSLICLIMSWT. At 460–831 the chain is on the cytoplasmic side; it reads MVLKGYRMIT…DPSSFMPSFK (372 aa). Positions 471–479 match the Box 1 motif motif; the sequence is MLPPVPGPK. 3 disordered regions span residues 527 to 563, 774 to 796, and 808 to 831; these read QQLMPSHDNGHPSKNAKITRKETDSDSGRGSCDSPSL, RVPHTPASQEPAKETSQSLQQGQ, and PSDCKRETGGSEYMDPSSFMPSFK. Positions 787-796 are enriched in polar residues; that stretch reads ETSQSLQQGQ.

The protein belongs to the type I cytokine receptor family. Type 1 subfamily.

It is found in the membrane. In terms of biological role, this is a receptor for the anterior pituitary hormone prolactin. The chain is Prolactin receptor (PRLR) from Gallus gallus (Chicken).